The sequence spans 275 residues: MKIANFEVGNGKPFFLMSGPCVIESEQMAMDTAGYLAEVTKDLGINFVYKSSFDKANRSSINSFRGLGVDKGLEILAKVKKTYNVPVVTDVHEDTPFAEVAEVVDVLQIPAFLCRQTNFILEVCKQGKPVNIKKGQFLAPWDMQHVVTKAKSTGNEQIMVCERGVSFGYNNLVSDMRSLEIMKATGCPVVFDATHSVQLPGGQGSSSGGQREFVPVLSKAAMAVGIDGLFMETHPNPDEAKSDGPNSFPMYKIKEFLSLLKELDHLVKSQPKTEL.

This sequence belongs to the KdsA family.

The protein resides in the cytoplasm. The catalysed reaction is D-arabinose 5-phosphate + phosphoenolpyruvate + H2O = 3-deoxy-alpha-D-manno-2-octulosonate-8-phosphate + phosphate. It participates in carbohydrate biosynthesis; 3-deoxy-D-manno-octulosonate biosynthesis; 3-deoxy-D-manno-octulosonate from D-ribulose 5-phosphate: step 2/3. Its pathway is bacterial outer membrane biogenesis; lipopolysaccharide biosynthesis. The polypeptide is 2-dehydro-3-deoxyphosphooctonate aldolase (Francisella tularensis subsp. holarctica (strain LVS)).